The primary structure comprises 1367 residues: Probable serine/threonine-protein kinase pkgA (1367 aa).

Disordered regions lie at residues 140–164, 264–429, 456–556, and 771–792; these read IDENNNNNNNNNNNNNNNNNKNKTI, KNGK…LLSR, PTPL…SRKP, and PREEELSQTPLGGRLRSDSDPV. A compositionally biased stretch (low complexity) spans 143–162; that stretch reads NNNNNNNNNNNNNNNNNKNK. Pro residues predominate over residues 271–282; it reads IKRPSPPLPPPQ. Positions 287 to 326 are enriched in basic and acidic residues; that stretch reads EQQKEQKEQQKEQQKEQQKEQQKEQEQKQQEPQKYVKFEI. Low complexity predominate over residues 340 to 381; sequence ISSSNISNEISKQQQQQQQQQQQQQQQQQQQQQQQQQQQQQQ. Residues 399 to 421 are compositionally biased toward polar residues; sequence ANNNILTTPLSSQPTQSLETPST. Residues 506–517 show a composition bias toward acidic residues; it reads GEDEEEDEDDDN. Residues 531-544 are compositionally biased toward basic residues; it reads LKNKRPFKKTHVHH. In terms of domain architecture, Protein kinase spans 810 to 1236; the sequence is FEFIKPITKG…AEEIKSHPFF (427 aa). ATP contacts are provided by residues 816–824 and Lys-839; that span reads ITKGGYGKV. Asp-933 functions as the Proton acceptor in the catalytic mechanism. Disordered stretches follow at residues 971-1034, 1084-1134, and 1288-1312; these read FSPT…PSNT, FIPP…HNIH, and QNQNKESSTILTTSPPSTSSTTATA. Over residues 979–1015 the composition is skewed to low complexity; it reads NNQSSSSSSVSNIGGSNTIGSNISSTNNNNNNNNTTG. A compositionally biased stretch (polar residues) spans 1025 to 1034; the sequence is NTETPIPSNT. 2 stretches are compositionally biased toward low complexity: residues 1092 to 1125 and 1294 to 1312; these read QQPISNIPTTTTTTTTTTTGQQSQQQSQQQQQTT and SSTILTTSPPSTSSTTATA. The AGC-kinase C-terminal domain maps to 1237 to 1347; that stretch reads KSINWKTILT…VNFQSLLELN (111 aa).

Belongs to the protein kinase superfamily. AGC Ser/Thr protein kinase family.

The enzyme catalyses L-seryl-[protein] + ATP = O-phospho-L-seryl-[protein] + ADP + H(+). It carries out the reaction L-threonyl-[protein] + ATP = O-phospho-L-threonyl-[protein] + ADP + H(+). The protein is Probable serine/threonine-protein kinase pkgA (pkgA) of Dictyostelium discoideum (Social amoeba).